Here is a 469-residue protein sequence, read N- to C-terminus: Trigger factor (469 aa).

The 86-residue stretch at 165-250 folds into the PPIase FKBP-type domain; sequence GDRVTIDYIG…VKAVCKSDEL (86 aa). The span at 444-460 shows a compositional bias: basic and acidic residues; sequence DLTEKKPLKKKTAEKVS. The interval 444-469 is disordered; sequence DLTEKKPLKKKTAEKVSTKKKAPKKS.

Belongs to the FKBP-type PPIase family. Tig subfamily.

The protein resides in the cytoplasm. The enzyme catalyses [protein]-peptidylproline (omega=180) = [protein]-peptidylproline (omega=0). Its function is as follows. Involved in protein export. Acts as a chaperone by maintaining the newly synthesized protein in an open conformation. Functions as a peptidyl-prolyl cis-trans isomerase. The chain is Trigger factor from Bartonella henselae (strain ATCC 49882 / DSM 28221 / CCUG 30454 / Houston 1) (Rochalimaea henselae).